We begin with the raw amino-acid sequence, 363 residues long: NAD(P)H-quinone oxidoreductase subunit 1, chloroplastic (363 aa).

The next 6 membrane-spanning stretches (helical) occupy residues 30-50, 104-124, 129-149, 248-268, 300-320, and 343-363; these read FLPILTLVLGITIGVLVIVWL, IAVISILLSYSVIPFSYHLVL, IGVFLWIAISSIAPIGLLMSG, YSGIKFGLFYVASYLNLLVSS, VFGTTIGIFITLAKTYFFLFI, and FLLPISLGNLLLTTSFQLLSL.

Belongs to the complex I subunit 1 family. NDH is composed of at least 16 different subunits, 5 of which are encoded in the nucleus.

It is found in the plastid. The protein resides in the chloroplast thylakoid membrane. The catalysed reaction is a plastoquinone + NADH + (n+1) H(+)(in) = a plastoquinol + NAD(+) + n H(+)(out). It carries out the reaction a plastoquinone + NADPH + (n+1) H(+)(in) = a plastoquinol + NADP(+) + n H(+)(out). NDH shuttles electrons from NAD(P)H:plastoquinone, via FMN and iron-sulfur (Fe-S) centers, to quinones in the photosynthetic chain and possibly in a chloroplast respiratory chain. The immediate electron acceptor for the enzyme in this species is believed to be plastoquinone. Couples the redox reaction to proton translocation, and thus conserves the redox energy in a proton gradient. This chain is NAD(P)H-quinone oxidoreductase subunit 1, chloroplastic, found in Eucalyptus globulus subsp. globulus (Tasmanian blue gum).